The following is a 150-amino-acid chain: Large ribosomal subunit protein bL9 (150 aa).

This sequence belongs to the bacterial ribosomal protein bL9 family.

In terms of biological role, binds to the 23S rRNA. The polypeptide is Large ribosomal subunit protein bL9 (Vibrio atlanticus (strain LGP32) (Vibrio splendidus (strain Mel32))).